The primary structure comprises 512 residues: Glutamyl-tRNA(Gln) amidotransferase subunit A (512 aa).

Active-site charge relay system residues include Lys82 and Ser157. Residue Ser181 is the Acyl-ester intermediate of the active site.

The protein belongs to the amidase family. GatA subfamily. As to quaternary structure, heterotrimer of A, B and C subunits.

The enzyme catalyses L-glutamyl-tRNA(Gln) + L-glutamine + ATP + H2O = L-glutaminyl-tRNA(Gln) + L-glutamate + ADP + phosphate + H(+). In terms of biological role, allows the formation of correctly charged Gln-tRNA(Gln) through the transamidation of misacylated Glu-tRNA(Gln) in organisms which lack glutaminyl-tRNA synthetase. The reaction takes place in the presence of glutamine and ATP through an activated gamma-phospho-Glu-tRNA(Gln). The protein is Glutamyl-tRNA(Gln) amidotransferase subunit A of Bordetella bronchiseptica (strain ATCC BAA-588 / NCTC 13252 / RB50) (Alcaligenes bronchisepticus).